The sequence spans 235 residues: Ubiquinone/menaquinone biosynthesis C-methyltransferase UbiE (235 aa).

Threonine 59, aspartate 84, and serine 123 together coordinate S-adenosyl-L-methionine.

This sequence belongs to the class I-like SAM-binding methyltransferase superfamily. MenG/UbiE family.

The enzyme catalyses a 2-demethylmenaquinol + S-adenosyl-L-methionine = a menaquinol + S-adenosyl-L-homocysteine + H(+). It catalyses the reaction a 2-methoxy-6-(all-trans-polyprenyl)benzene-1,4-diol + S-adenosyl-L-methionine = a 5-methoxy-2-methyl-3-(all-trans-polyprenyl)benzene-1,4-diol + S-adenosyl-L-homocysteine + H(+). It functions in the pathway quinol/quinone metabolism; menaquinone biosynthesis; menaquinol from 1,4-dihydroxy-2-naphthoate: step 2/2. The protein operates within cofactor biosynthesis; ubiquinone biosynthesis. Functionally, methyltransferase required for the conversion of demethylmenaquinol (DMKH2) to menaquinol (MKH2) and the conversion of 2-polyprenyl-6-methoxy-1,4-benzoquinol (DDMQH2) to 2-polyprenyl-3-methyl-6-methoxy-1,4-benzoquinol (DMQH2). This Campylobacter jejuni subsp. jejuni serotype O:2 (strain ATCC 700819 / NCTC 11168) protein is Ubiquinone/menaquinone biosynthesis C-methyltransferase UbiE.